The following is a 93-amino-acid chain: Large ribosomal subunit protein bL27 (93 aa).

Positions methionine 1–phenylalanine 8 are excised as a propeptide. The segment at phenylalanine 8 to glycine 29 is disordered.

This sequence belongs to the bacterial ribosomal protein bL27 family. The N-terminus is cleaved by ribosomal processing cysteine protease Prp.

The polypeptide is Large ribosomal subunit protein bL27 (Limosilactobacillus reuteri (strain DSM 20016) (Lactobacillus reuteri)).